We begin with the raw amino-acid sequence, 324 residues long: NADH-ubiquinone oxidoreductase chain 1 (324 aa).

The next 8 membrane-spanning stretches (helical) occupy residues 9–29 (LTMA…LTLV), 75–95 (ILFI…WIPL), 106–126 (LGLL…LWSG), 142–162 (VAQT…VIML), 177–197 (PLYL…STLA), 228–248 (LFFL…AILF), 259–279 (ELFP…FLWV), and 300–320 (LPLT…YAGI).

It belongs to the complex I subunit 1 family.

It is found in the mitochondrion inner membrane. It carries out the reaction a ubiquinone + NADH + 5 H(+)(in) = a ubiquinol + NAD(+) + 4 H(+)(out). Core subunit of the mitochondrial membrane respiratory chain NADH dehydrogenase (Complex I) that is believed to belong to the minimal assembly required for catalysis. Complex I functions in the transfer of electrons from NADH to the respiratory chain. The immediate electron acceptor for the enzyme is believed to be ubiquinone. The polypeptide is NADH-ubiquinone oxidoreductase chain 1 (MT-ND1) (Struthio camelus (Common ostrich)).